Here is a 393-residue protein sequence, read N- to C-terminus: S-adenosylmethionine synthase (393 aa).

Glu9 contacts Mg(2+). An ATP-binding site is contributed by His15. Glu43 contacts K(+). L-methionine-binding residues include Glu56 and Gln99. Residues 167–169, 235–238, Asp246, 252–253, Ala269, Lys273, and Lys277 each bind ATP; these read DGK, SGRF, and RK. Residue Asp246 coordinates L-methionine. An L-methionine-binding site is contributed by Lys277.

Belongs to the AdoMet synthase family. In terms of assembly, homotetramer. Requires Mn(2+) as cofactor. Mg(2+) is required as a cofactor. The cofactor is Co(2+). K(+) serves as cofactor.

It localises to the cytoplasm. The catalysed reaction is L-methionine + ATP + H2O = S-adenosyl-L-methionine + phosphate + diphosphate. Its pathway is amino-acid biosynthesis; S-adenosyl-L-methionine biosynthesis; S-adenosyl-L-methionine from L-methionine: step 1/1. Catalyzes the formation of S-adenosylmethionine from methionine and ATP. The reaction comprises two steps that are both catalyzed by the same enzyme: formation of S-adenosylmethionine (AdoMet) and triphosphate, and subsequent hydrolysis of the triphosphate. In Gossypium hirsutum (Upland cotton), this protein is S-adenosylmethionine synthase (SAMS).